The following is a 310-amino-acid chain: Ribosomal protein uL3 glutamine methyltransferase (310 aa).

It belongs to the protein N5-glutamine methyltransferase family. PrmB subfamily.

It catalyses the reaction L-glutaminyl-[ribosomal protein uL3] + S-adenosyl-L-methionine = N(5)-methyl-L-glutaminyl-[ribosomal protein uL3] + S-adenosyl-L-homocysteine + H(+). In terms of biological role, specifically methylates large ribosomal subunit protein uL3 on 'Gln-150'. The chain is Ribosomal protein uL3 glutamine methyltransferase from Shigella dysenteriae serotype 1 (strain Sd197).